The primary structure comprises 156 residues: Putative pre-16S rRNA nuclease (156 aa).

The protein belongs to the YqgF nuclease family.

Its subcellular location is the cytoplasm. Functionally, could be a nuclease involved in processing of the 5'-end of pre-16S rRNA. This is Putative pre-16S rRNA nuclease from Ehrlichia ruminantium (strain Welgevonden).